Reading from the N-terminus, the 527-residue chain is Zinc finger CCCH-type with G patch domain-containing protein (527 aa).

The interval 97–126 (GEVSGSSSDMREREDEREEEDDGEVEGEVD) is disordered. The span at 111–125 (DEREEEDDGEVEGEV) shows a compositional bias: acidic residues. The C3H1-type zinc-finger motif lies at 173–200 (QKSMKPCPFFLEDKCRFADNCRFSHGEV). The disordered stretch occupies residues 268-312 (LREDDLPSCSDSEDDDNGEGEAAFPRVLTQEEDWAPSRSSSAFGG). One can recognise a G-patch domain in the interval 317-363 (TRGIGSKLMLKMGYEYGKGLGKTSEGRVEPVLAVVLPKGKSLDQCAE). Disordered regions lie at residues 369-396 (TQRK…AHNT), 410-444 (LGNG…YKGG), and 505-527 (KAQE…MTEF). Residues 384 to 393 (RNKRTRKARA) are compositionally biased toward basic residues. The span at 511–527 (AQRENRKADTHKKMTEF) shows a compositional bias: basic and acidic residues.

The protein resides in the nucleus. In terms of biological role, transcription repressor that specifically binds the 5'-GGAG[GA]A[GA]A-3' consensus sequence. Represses transcription by recruiting the chromatin multiprotein complex NuRD to target promoters. Negatively regulates expression of EGFR, a gene involved in cell proliferation, survival and migration. This Salmo salar (Atlantic salmon) protein is Zinc finger CCCH-type with G patch domain-containing protein (zgpat).